The sequence spans 507 residues: Histidine ammonia-lyase (507 aa).

Positions 141-143 form a cross-link, 5-imidazolinone (Ala-Gly); sequence ASG. Ser-142 is subject to 2,3-didehydroalanine (Ser).

It belongs to the PAL/histidase family. In terms of processing, contains an active site 4-methylidene-imidazol-5-one (MIO), which is formed autocatalytically by cyclization and dehydration of residues Ala-Ser-Gly.

The protein localises to the cytoplasm. The catalysed reaction is L-histidine = trans-urocanate + NH4(+). Its pathway is amino-acid degradation; L-histidine degradation into L-glutamate; N-formimidoyl-L-glutamate from L-histidine: step 1/3. This is Histidine ammonia-lyase from Burkholderia cenocepacia (strain ATCC BAA-245 / DSM 16553 / LMG 16656 / NCTC 13227 / J2315 / CF5610) (Burkholderia cepacia (strain J2315)).